The primary structure comprises 484 residues: Protein nucleotidyltransferase YdiU (484 aa).

Positions 81, 83, 84, 103, 115, 116, 166, and 173 each coordinate ATP. Aspartate 244 acts as the Proton acceptor in catalysis. Positions 245 and 254 each coordinate Mg(2+). Aspartate 254 contacts ATP.

The protein belongs to the SELO family. It depends on Mg(2+) as a cofactor. Mn(2+) serves as cofactor.

The catalysed reaction is L-seryl-[protein] + ATP = 3-O-(5'-adenylyl)-L-seryl-[protein] + diphosphate. It catalyses the reaction L-threonyl-[protein] + ATP = 3-O-(5'-adenylyl)-L-threonyl-[protein] + diphosphate. The enzyme catalyses L-tyrosyl-[protein] + ATP = O-(5'-adenylyl)-L-tyrosyl-[protein] + diphosphate. It carries out the reaction L-histidyl-[protein] + UTP = N(tele)-(5'-uridylyl)-L-histidyl-[protein] + diphosphate. The catalysed reaction is L-seryl-[protein] + UTP = O-(5'-uridylyl)-L-seryl-[protein] + diphosphate. It catalyses the reaction L-tyrosyl-[protein] + UTP = O-(5'-uridylyl)-L-tyrosyl-[protein] + diphosphate. Its function is as follows. Nucleotidyltransferase involved in the post-translational modification of proteins. It can catalyze the addition of adenosine monophosphate (AMP) or uridine monophosphate (UMP) to a protein, resulting in modifications known as AMPylation and UMPylation. This is Protein nucleotidyltransferase YdiU from Shewanella sp. (strain MR-7).